The chain runs to 391 residues: Pectate lyase D (391 aa).

An N-terminal signal peptide occupies residues 1–31 (MNNTRVSFRSTKSLLAAIIATSMMTWSVNRA). Ca(2+) is bound by residues aspartate 170 and aspartate 213. Arginine 266 is an active-site residue.

Belongs to the polysaccharide lyase 1 family. PLBC subfamily. It depends on Ca(2+) as a cofactor.

The protein localises to the secreted. The enzyme catalyses Eliminative cleavage of (1-&gt;4)-alpha-D-galacturonan to give oligosaccharides with 4-deoxy-alpha-D-galact-4-enuronosyl groups at their non-reducing ends.. It functions in the pathway glycan metabolism; pectin degradation; 2-dehydro-3-deoxy-D-gluconate from pectin: step 2/5. Involved in maceration and soft-rotting of plant tissue. The protein is Pectate lyase D (pelD) of Dickeya chrysanthemi (Pectobacterium chrysanthemi).